Here is a 251-residue protein sequence, read N- to C-terminus: PF03932 family protein CutC (251 aa).

This sequence belongs to the CutC family.

It localises to the cytoplasm. In Bacteroides fragilis (strain YCH46), this protein is PF03932 family protein CutC.